Reading from the N-terminus, the 159-residue chain is Urease accessory protein UreE (159 aa).

Belongs to the UreE family.

It localises to the cytoplasm. Functionally, involved in urease metallocenter assembly. Binds nickel. Probably functions as a nickel donor during metallocenter assembly. The chain is Urease accessory protein UreE from Pseudomonas entomophila (strain L48).